The following is a 586-amino-acid chain: Cytosolic Fe-S cluster assembly factor NAR1 (586 aa).

Cysteine 20, cysteine 73, cysteine 76, cysteine 79, cysteine 220, cysteine 275, cysteine 462, and cysteine 466 together coordinate [4Fe-4S] cluster.

Belongs to the NARF family.

In terms of biological role, component of the cytosolic Fe/S protein assembly machinery. Required for maturation of extramitochondrial Fe/S proteins. May play a role in the transfer of pre-assembled Fe/S clusters to target apoproteins. The chain is Cytosolic Fe-S cluster assembly factor NAR1 (NAR1) from Chaetomium globosum (strain ATCC 6205 / CBS 148.51 / DSM 1962 / NBRC 6347 / NRRL 1970) (Soil fungus).